The following is a 272-amino-acid chain: N-acetylmuramoyl-L-alanine amidase CwlA (272 aa).

In terms of domain architecture, N-acetylmuramoyl-L-alanine amidase spans 24–142 (KAEYITIHNT…QDWNGKYCPH (119 aa)).

Belongs to the N-acetylmuramoyl-L-alanine amidase 2 family.

The enzyme catalyses Hydrolyzes the link between N-acetylmuramoyl residues and L-amino acid residues in certain cell-wall glycopeptides.. Functionally, autolysins are involved in some important biological processes such as cell separation, cell-wall turnover, competence for genetic transformation, formation of the flagella and sporulation. The polypeptide is N-acetylmuramoyl-L-alanine amidase CwlA (cwlA) (Bacillus subtilis (strain 168)).